Here is a 255-residue protein sequence, read N- to C-terminus: uncharacterized protein (255 aa).

Residues 1 to 23 (MKRLNKLVLGINLLFLVISITAG) form the signal peptide. Cys24 carries N-palmitoyl cysteine lipidation. Residue Cys24 is the site of S-diacylglycerol cysteine attachment.

It belongs to the staphylococcal tandem lipoprotein family.

It localises to the cell membrane. This is an uncharacterized protein from Staphylococcus aureus (strain MRSA252).